Here is a 136-residue protein sequence, read N- to C-terminus: MARTKQTARKSTGGKAPRKQLASKAARKSAPVTGGVKKPHRYKPGTVALREIRRFQKSTELLIRKLPFQRLVREIAQDFKSDLRFQSSAIGALQEAVEAYLVSLFEDTNLCAIHAKRVTIQKKDIQLARRLRGERS.

Residues 1 to 41 (MARTKQTARKSTGGKAPRKQLASKAARKSAPVTGGVKKPHR) are disordered. N6,N6,N6-trimethyllysine; alternate is present on Lys-5. At Lys-5 the chain carries N6,N6-dimethyllysine; alternate. N6-methyllysine; alternate is present on residues Lys-5 and Lys-10. Lys-10 carries the N6-acetyllysine; alternate modification. Phosphoserine is present on Ser-11. Residue Lys-15 is modified to N6,N6-dimethyllysine; alternate. N6-acetyllysine; alternate is present on residues Lys-15, Lys-19, Lys-24, Lys-28, and Lys-37. Lys-19, Lys-24, Lys-28, and Lys-37 each carry N6-methyllysine; alternate. Lys-28 and Lys-37 each carry N6,N6,N6-trimethyllysine; alternate. N6,N6-dimethyllysine; alternate occurs at positions 28 and 37. N6-acetyllysine occurs at positions 57 and 65. At Lys-80 the chain carries N6,N6,N6-trimethyllysine; alternate. Lys-80 is modified (N6,N6-dimethyllysine; alternate). N6-methyllysine; alternate is present on Lys-80.

Belongs to the histone H3 family. As to quaternary structure, the nucleosome is a histone octamer containing two molecules each of H2A, H2B, H3 and H4 assembled in one H3-H4 heterotetramer and two H2A-H2B heterodimers. The octamer wraps approximately 147 bp of DNA. Post-translationally, phosphorylated to form H3S10ph. H3S10ph promotes subsequent H3K14ac formation and is required for transcriptional activation through TBP recruitment to the promoters. In terms of processing, mono-, di- and trimethylated by the COMPASS complex to form H3K4me1/2/3. H3K4me activates gene expression by regulating transcription elongation and plays a role in telomere length maintenance. H3K4me enrichment correlates with transcription levels, and occurs in a 5' to 3' gradient with H3K4me3 enrichment at the 5'-end of genes, shifting to H3K4me2 and then H3K4me1. Methylated by SET2 to form H3K36me. H3K36me represses gene expression. Methylated by DOT1 to form H3K79me. H3K79me is required for association of SIR proteins with telomeric regions and for telomeric silencing. The COMPASS-mediated formation of H3K4me2/3 and the DOT1-mediated formation of H3K79me require H2BK123ub1. Acetylation of histone H3 leads to transcriptional activation. H3K14ac formation by GCN5 is promoted by H3S10ph. H3K14ac can also be formed by ESA1. H3K56ac formation occurs predominantly in newly synthesized H3 molecules during G1, S and G2/M of the cell cycle and may be involved in DNA repair.

It is found in the nucleus. It localises to the chromosome. In terms of biological role, core component of nucleosome. Nucleosomes wrap and compact DNA into chromatin, limiting DNA accessibility to the cellular machineries which require DNA as a template. Histones thereby play a central role in transcription regulation, DNA repair, DNA replication and chromosomal stability. DNA accessibility is regulated via a complex set of post-translational modifications of histones, also called histone code, and nucleosome remodeling. The chain is Histone H3.3 (HHT3) from Meyerozyma guilliermondii (strain ATCC 6260 / CBS 566 / DSM 6381 / JCM 1539 / NBRC 10279 / NRRL Y-324) (Yeast).